A 327-amino-acid chain; its full sequence is Ribose operon repressor (327 aa).

In terms of domain architecture, HTH lacI-type spans 1-56 (MTTIKQVALEAGVSKSTVSRFIAQNGYVSDEAREKIERAIKKLNFRPNLSAQSLKT). A DNA-binding region (H-T-H motif) is located at residues 4 to 23 (IKQVALEAGVSKSTVSRFIA).

Its function is as follows. Transcriptional repressor for the ribose rbsDACBK operon. The polypeptide is Ribose operon repressor (rbsR) (Lactococcus lactis subsp. lactis (strain IL1403) (Streptococcus lactis)).